A 331-amino-acid polypeptide reads, in one-letter code: 4-hydroxy-3-methylbut-2-enyl diphosphate reductase (331 aa).

Cys-12 provides a ligand contact to [4Fe-4S] cluster. (2E)-4-hydroxy-3-methylbut-2-enyl diphosphate contacts are provided by His-43 and His-81. The dimethylallyl diphosphate site is built by His-43 and His-81. The isopentenyl diphosphate site is built by His-43 and His-81. Residue Cys-103 coordinates [4Fe-4S] cluster. Position 131 (His-131) interacts with (2E)-4-hydroxy-3-methylbut-2-enyl diphosphate. His-131 contributes to the dimethylallyl diphosphate binding site. Isopentenyl diphosphate is bound at residue His-131. Glu-133 serves as the catalytic Proton donor. Thr-170 lines the (2E)-4-hydroxy-3-methylbut-2-enyl diphosphate pocket. Cys-198 serves as a coordination point for [4Fe-4S] cluster. Positions 226, 228, and 271 each coordinate (2E)-4-hydroxy-3-methylbut-2-enyl diphosphate. Residues Ser-226, Asn-228, and Ser-271 each coordinate dimethylallyl diphosphate. The isopentenyl diphosphate site is built by Ser-226, Asn-228, and Ser-271.

This sequence belongs to the IspH family. The cofactor is [4Fe-4S] cluster.

The enzyme catalyses isopentenyl diphosphate + 2 oxidized [2Fe-2S]-[ferredoxin] + H2O = (2E)-4-hydroxy-3-methylbut-2-enyl diphosphate + 2 reduced [2Fe-2S]-[ferredoxin] + 2 H(+). It catalyses the reaction dimethylallyl diphosphate + 2 oxidized [2Fe-2S]-[ferredoxin] + H2O = (2E)-4-hydroxy-3-methylbut-2-enyl diphosphate + 2 reduced [2Fe-2S]-[ferredoxin] + 2 H(+). The protein operates within isoprenoid biosynthesis; dimethylallyl diphosphate biosynthesis; dimethylallyl diphosphate from (2E)-4-hydroxy-3-methylbutenyl diphosphate: step 1/1. Its pathway is isoprenoid biosynthesis; isopentenyl diphosphate biosynthesis via DXP pathway; isopentenyl diphosphate from 1-deoxy-D-xylulose 5-phosphate: step 6/6. Its function is as follows. Catalyzes the conversion of 1-hydroxy-2-methyl-2-(E)-butenyl 4-diphosphate (HMBPP) into a mixture of isopentenyl diphosphate (IPP) and dimethylallyl diphosphate (DMAPP). Acts in the terminal step of the DOXP/MEP pathway for isoprenoid precursor biosynthesis. In Listeria monocytogenes serovar 1/2a (strain ATCC BAA-679 / EGD-e), this protein is 4-hydroxy-3-methylbut-2-enyl diphosphate reductase.